The sequence spans 210 residues: Probable GTP-binding protein EngB (210 aa).

An EngB-type G domain is found at 24–199 (QGCEVAFAGR…WEVLGRWLDL (176 aa)). Residues 32–39 (GRSNAGKS), 59–63 (GRTRM), 77–80 (DLPG), 144–147 (TKSD), and 178–180 (FSS) each bind GTP. Serine 39 and threonine 61 together coordinate Mg(2+).

Belongs to the TRAFAC class TrmE-Era-EngA-EngB-Septin-like GTPase superfamily. EngB GTPase family. The cofactor is Mg(2+).

Functionally, necessary for normal cell division and for the maintenance of normal septation. The polypeptide is Probable GTP-binding protein EngB (Methylococcus capsulatus (strain ATCC 33009 / NCIMB 11132 / Bath)).